Consider the following 716-residue polypeptide: Cyclic nucleotide-gated ion channel 1 (716 aa).

Over 1 to 97 (MNFRQEKFVR…QGPFLQRWNK (97 aa)) the chain is Cytoplasmic. A helical membrane pass occupies residues 98–118 (IFVLACIIAVSLDPLFFYVPI). The Extracellular segment spans residues 119 to 132 (IDDAKKCLGIDKKM). The chain crosses the membrane as a helical span at residues 133–153 (EITASVLRSFTDVFYVLHIIF). Topologically, residues 154-187 (QFRTGFIAPSSRVFGRGVLVEDKREIAKRYLSSH) are cytoplasmic. Residues 188 to 208 (FIIDILAVLPLPQMVILIIIP) traverse the membrane as a helical segment. Over 209-220 (HMRGSSSLNTKN) the chain is Extracellular. The chain crosses the membrane as a helical span at residues 221–241 (MLKFIVFFQYIPRFIRIYPLY). Residues 242 to 259 (KEVTRTSGILTETAWAGA) lie on the Cytoplasmic side of the membrane. The chain crosses the membrane as a helical span at residues 260–280 (AFNLFLYMLASHVFGAFWYLF). The Extracellular segment spans residues 281–379 (SIERETVCWK…GQNLKTSTYI (99 aa)). The chain crosses the membrane as a helical span at residues 380–400 (WEICFAVFISIAGLVLFSFLI). The Cytoplasmic portion of the chain corresponds to 401–716 (GNMQTYLQST…PAEPDFNSDD (316 aa)). A nucleoside 3',5'-cyclic phosphate is bound by residues 486 to 610 (MFEK…SKQL) and E557. Residues 602-617 (FRRLHSKQLRHTFRYY) form a calmodulin-binding region. An IQ domain is found at 622–651 (KTWAACFIQAAWRRYIKKKLEESLKEEENR). Residues 689 to 716 (SVRKPRMPERMPPMLLQKPAEPDFNSDD) form a disordered region.

This sequence belongs to the cyclic nucleotide-gated cation channel (TC 1.A.1.5) family. Homotetramer or heterotetramer (Potential). Binds calmodulin-2/3/5 with a higher affinity than calmodulin-1/4. As to expression, expressed in the whole plant but only weakly in roots.

Its subcellular location is the cell membrane. In terms of biological role, acts as a cyclic nucleotide-gated ion channel. Can be activated by cyclic AMP which leads to an opening of the cation channel. May be responsible for cAMP-induced calcium entry in cells and thus should be involved in the calcium signal transduction. Could transport K(+), Na(+) and Pb(2+). This is Cyclic nucleotide-gated ion channel 1 (CNGC1) from Arabidopsis thaliana (Mouse-ear cress).